Here is a 546-residue protein sequence, read N- to C-terminus: MNSNTKIIFVTGGVVSSLGKGVTAASLATLLESRGLNVTMMKLDPYINVDPGTMSPLQHGEVFVTEDGAETDLDLGHYERFIRNKMTQANNFTTGKVYQSVLRRERKGDYLGATIQVIPHITDEIKRRICSGIADDVDVAIVEIGGTVGDIESQPFLEAIRQLRIELGRNRTLFVHLTLLPYIKVAGEIKTKPTQHSVKELRGIGIQADVLVCRCEKKFDDSEKRKIALFTNVDQDCIFTAEDVDTIYEVPLKYNQQGFDAKLVELLNLNAKEADLSEWQNVVNTIRDVKGEVIIAMVGKYVSLTEAYKSLNEALYNAGYKKGVKVKIKFVDSEDVNENNVESYFKDVAAILVPGGFGSRGVEGKIISIKYARENQIPFLGICLGMQLAVIEYARNILGIKDAHSSELEPTTANPVIGLITEWQAEDGTVHQRTHSSDLGGTMRLGGYKCVLKQGSRAREIYQADEVVERHRHRYEVNSNYVERLEEAGLIFSGRSEDNKLMELIEIPQHKWFIACQAHPEFTSTPRYGHKLFESYIQAAIENSNN.

The tract at residues 1–269 (MNSNTKIIFV…DAKLVELLNL (269 aa)) is amidoligase domain. Serine 16 serves as a coordination point for CTP. Residue serine 16 participates in UTP binding. ATP is bound by residues 17–22 (SLGKGV) and aspartate 74. Mg(2+) is bound by residues aspartate 74 and glutamate 143. CTP contacts are provided by residues 150–152 (DIE), 190–195 (KTKPTQ), and lysine 226. Residues 190-195 (KTKPTQ) and lysine 226 contribute to the UTP site. In terms of domain architecture, Glutamine amidotransferase type-1 spans 294-546 (IIAMVGKYVS…IQAAIENSNN (253 aa)). Glycine 356 contacts L-glutamine. Residue cysteine 383 is the Nucleophile; for glutamine hydrolysis of the active site. L-glutamine-binding positions include 384 to 387 (LGMQ), glutamate 407, and arginine 474. Catalysis depends on residues histidine 519 and glutamate 521.

This sequence belongs to the CTP synthase family. In terms of assembly, homotetramer.

The enzyme catalyses UTP + L-glutamine + ATP + H2O = CTP + L-glutamate + ADP + phosphate + 2 H(+). The catalysed reaction is L-glutamine + H2O = L-glutamate + NH4(+). It carries out the reaction UTP + NH4(+) + ATP = CTP + ADP + phosphate + 2 H(+). Its pathway is pyrimidine metabolism; CTP biosynthesis via de novo pathway; CTP from UDP: step 2/2. Its activity is regulated as follows. Allosterically activated by GTP, when glutamine is the substrate; GTP has no effect on the reaction when ammonia is the substrate. The allosteric effector GTP functions by stabilizing the protein conformation that binds the tetrahedral intermediate(s) formed during glutamine hydrolysis. Inhibited by the product CTP, via allosteric rather than competitive inhibition. Catalyzes the ATP-dependent amination of UTP to CTP with either L-glutamine or ammonia as the source of nitrogen. Regulates intracellular CTP levels through interactions with the four ribonucleotide triphosphates. The chain is CTP synthase from Francisella tularensis subsp. holarctica (strain FTNF002-00 / FTA).